The primary structure comprises 155 residues: Cell division protein SepF (155 aa).

Acidic residues predominate over residues 16–35 (TEDEEEDVETVEESEDVEEE). Residues 16–44 (TEDEEEDVETVEESEDVEEEESKKPQFIQ) are disordered.

It belongs to the SepF family. Homodimer. Interacts with FtsZ.

It localises to the cytoplasm. Its function is as follows. Cell division protein that is part of the divisome complex and is recruited early to the Z-ring. Probably stimulates Z-ring formation, perhaps through the cross-linking of FtsZ protofilaments. Its function overlaps with FtsA. The chain is Cell division protein SepF from Acetivibrio thermocellus (strain ATCC 27405 / DSM 1237 / JCM 9322 / NBRC 103400 / NCIMB 10682 / NRRL B-4536 / VPI 7372) (Clostridium thermocellum).